The sequence spans 356 residues: MSQQFTLRSHNSSITFIYPSPTSSLHLYTADSTGLIIEWDLITRRPVITWQAHNDTILSMSTIHNHLLTHSRDNTIKIWNNTDCIMEIPCNSLNFSNVVVVHDEILITPASINSNNLDVYKITSDWQLTRLISDINVYQLVEKGIQFEEIGSRNDYGIIMKIHLVDNIIYVGFESGDIVGLELILPKPIVKENSNIDKLIINQSPKLIVKYHNSIHVPNPIISMSTFQDILVSGSTTNKIVIHKHPVEIIKVTHSGVQSIVNYKNENLIIGFWNGEIRYDENVIKRDVPMIQNNDNDDRSKSIKKLTFMTLLVPQKVESTTTGKNKYSQLIRGKKILTTDTLLVGYEDGSIVAYKV.

WD repeat units follow at residues 9–49 (SHNS…PVIT), 52–89 (AHND…MEIP), 210–242 (KYHN…KIVI), 243–283 (HKHP…DENV), and 317–356 (VEST…AYKV).

The protein belongs to the WD repeat ASA1 family. As to quaternary structure, component of the ASTRA chromatin remodeling machinery complex.

Its subcellular location is the nucleus. Component of the ASTRA complex involved in chromatin remodeling. This chain is ASTRA-associated protein 1 (ASA1), found in Candida tropicalis (strain ATCC MYA-3404 / T1) (Yeast).